Reading from the N-terminus, the 197-residue chain is Protein SYM1 (197 aa).

Helical transmembrane passes span 20–40 (AIMTGALFGIGDVSAQLLFPT), 55–75 (AVIYGSLIFSFIGDKWYKILN), 97–117 (VDQLAFAPLGLPFYFTCMSIM), and 137–157 (LLTNWAVWPLFQAINFSVVPL).

Belongs to the peroxisomal membrane protein PXMP2/4 family.

It localises to the mitochondrion inner membrane. In terms of biological role, may be involved in cellular response to stress. Required to maintain mitochondrial DNA (mtDNA) integrity and stability. Required for ethanol metabolism and tolerance during heat shock. The chain is Protein SYM1 (SYM1) from Saccharomyces cerevisiae (strain ATCC 204508 / S288c) (Baker's yeast).